Here is a 227-residue protein sequence, read N- to C-terminus: 2,3-bisphosphoglycerate-dependent phosphoglycerate mutase (227 aa).

Substrate is bound by residues 8–15, 21–22, R58, 110–113, K121, 137–138, and 181–182; these read RHGKSVWN, TG, ERMY, RR, and GN. The Tele-phosphohistidine intermediate role is filled by H9. Catalysis depends on E110, which acts as the Proton donor/acceptor.

It belongs to the phosphoglycerate mutase family. BPG-dependent PGAM subfamily.

The enzyme catalyses (2R)-2-phosphoglycerate = (2R)-3-phosphoglycerate. The protein operates within carbohydrate degradation; glycolysis; pyruvate from D-glyceraldehyde 3-phosphate: step 3/5. In terms of biological role, catalyzes the interconversion of 2-phosphoglycerate and 3-phosphoglycerate. This is 2,3-bisphosphoglycerate-dependent phosphoglycerate mutase from Chlamydia felis (strain Fe/C-56) (Chlamydophila felis).